The primary structure comprises 547 residues: Fimbria adhesin EcpD (547 aa).

Residues 1–20 (MRVNLLIAMIIFALIWPATA) form the signal peptide.

This sequence belongs to the EcpD/MatE family. Forms polymers. Interacts with EcpA.

Its subcellular location is the fimbrium. Functionally, part of the ecpRABCDE operon, which encodes the E.coli common pilus (ECP). ECP is found in both commensal and pathogenic strains and plays a dual role in early-stage biofilm development and host cell recognition. Tip pilus adhesin, which is required for assembly of EcpA into fibers. The protein is Fimbria adhesin EcpD (ecpD) of Escherichia coli O127:H6 (strain E2348/69 / EPEC).